Reading from the N-terminus, the 281-residue chain is Dexamethasone-induced Ras-related protein 1 (281 aa).

Position 11 is an S-nitrosocysteine (cysteine 11). GTP is bound at residue 31 to 38 (GSSKVGKT). The short motif at 53–61 (YTPTIEDFH) is the Effector region element. GTP contacts are provided by residues 78 to 82 (DTSGN) and 145 to 148 (NKGD). Cysteine 278 is modified (cysteine methyl ester). Cysteine 278 carries the S-farnesyl cysteine lipid modification. The propeptide at 279 to 281 (VIS) is removed in mature form.

Belongs to the small GTPase superfamily. RasD family. Forms a ternary complex with CAPON and NOS1. Component of a complex, at least composed of APBB1, RASD1/DEXRAS1 and APP. Interacts with APBB1/FE65. In terms of processing, S-nitrosylation stimulates guanine-nucleotide exchange activity. Expressed in a variety of tissues including heart, cardiovascular tissues, brain, placenta, lung, liver, skeletal muscle, kidney, pancreas, gastrointestinal and reproductive tissues.

It is found in the cell membrane. The protein resides in the cytoplasm. The protein localises to the perinuclear region. It localises to the nucleus. In terms of biological role, small GTPase. Negatively regulates the transcription regulation activity of the APBB1/FE65-APP complex via its interaction with APBB1/FE65. The polypeptide is Dexamethasone-induced Ras-related protein 1 (RASD1) (Homo sapiens (Human)).